A 1531-amino-acid polypeptide reads, in one-letter code: Multidrug resistance-associated protein 1 (1531 aa).

Residues 1-33 are Extracellular-facing; that stretch reads MALRGFCSADGSDPLWDWNVTWYTSNPDFTKCF. Asn19 carries an N-linked (GlcNAc...) asparagine glycan. Residues 34–54 form a helical membrane-spanning segment; it reads QNTVLVWVPCFYLWACFPFYF. Over 55–74 the chain is Cytoplasmic; it reads LYLSRHDRGYIQMTLLNKTK. A helical transmembrane segment spans residues 75–95; the sequence is TALGFLLWIVCWADLFYSFWE. At 96 to 100 the chain is on the extracellular side; it reads RSRGI. The helical transmembrane segment at 101–121 threads the bilayer; it reads FLAPVFLVSPTLLGITMLLAT. The Cytoplasmic portion of the chain corresponds to 122-133; it reads FLIQLERRKGVQ. Residues 134–154 form a helical membrane-spanning segment; that stretch reads SSGIMLTFWLVALLCALAILR. At 155-172 the chain is on the extracellular side; the sequence is SKIMTALKEDVQVDLFRD. The chain crosses the membrane as a helical span at residues 173-193; sequence MTFYVYFSLVLIQLVLSCFSD. At 194-316 the chain is on the cytoplasmic side; the sequence is RSPLFSETIH…KEWNPSLFKV (123 aa). Phosphotyrosine is present on Tyr277. Ser289 is subject to Phosphoserine. A helical membrane pass occupies residues 317–337; that stretch reads LYKTFGPYFLMSFFFKAIHDL. Positions 325 to 608 constitute an ABC transmembrane type-1 1 domain; it reads FLMSFFFKAI…LPMVISSIVQ (284 aa). The Extracellular segment spans residues 338–363; sequence MMFSGPEILKLLINFVNDTKAPDWQG. A helical membrane pass occupies residues 364-384; sequence YFYTALLFVAACLQTLVLHQY. Residues 385-440 are Cytoplasmic-facing; that stretch reads FHICFVSGMRIKTAVIGAVYRKALVITNAARKSSTVGEIVNLMSVDAQRFMDLATY. Residues 441 to 461 form a helical membrane-spanning segment; sequence INMIWSAPLQVILALYLLWRN. The Extracellular portion of the chain corresponds to 462–464; sequence LGP. Residues 465–485 traverse the membrane as a helical segment; the sequence is PILAGVAVMVLMVPVNAVMAM. The Cytoplasmic portion of the chain corresponds to 486 to 547; that stretch reads KTKTYQVAHM…VLKKSAYLAA (62 aa). Lys503 carries the N6-succinyllysine modification. Residues 548–568 form a helical membrane-spanning segment; that stretch reads VGTFTWVCTPFLVALCTFAVY. The Extracellular segment spans residues 569-590; the sequence is VTIDKNNVLDAQKAFVSLALFN. The helical transmembrane segment at 591–611 threads the bilayer; that stretch reads ILRFPLNILPMVISSIVQASV. At 612–967 the chain is on the cytoplasmic side; the sequence is SLKRLRIFLS…VKLSVYWDYM (356 aa). Residues 644–868 enclose the ABC transporter 1 domain; the sequence is ITVRNATFTW…DGAFAEFLRT (225 aa). ATP is bound at residue 678 to 685; sequence GQVGCGKS. The interval 871 to 893 is disordered; that stretch reads SAEQEQDPEDNGVTGVSGPGKEA. Residues Ser905, Ser915, and Ser930 each carry the phosphoserine modification. The disordered stretch occupies residues 917–938; it reads SSSYSGDVSRQHNSTAELQKDG. A compositionally biased stretch (polar residues) spans 922 to 933; that stretch reads GDVSRQHNSTAE. A helical membrane pass occupies residues 968 to 988; the sequence is KAIGLFISFLSIFLFICNHVA. The 282-residue stretch at 975-1256 folds into the ABC transmembrane type-1 2 domain; the sequence is SFLSIFLFIC…LVRMSSEMET (282 aa). Residues 989–1025 are Extracellular-facing; the sequence is ALASNYWLSLWTDDPIVNGTQEHTKVRLSVYGALGIS. N-linked (GlcNAc...) asparagine glycosylation is present at Asn1006. Residues 1026-1046 form a helical membrane-spanning segment; the sequence is QGIAVFGYSMAVSIGGILASR. Topologically, residues 1047–1089 are cytoplasmic; it reads CLHVDLLHSILRSPMSFFERTPSGNLVNRFSKELDTVDSMIPE. A helical membrane pass occupies residues 1090 to 1110; the sequence is VIKMFMGSLFNVIGACIVILL. A topological domain (extracellular) is located at residue Ala1111. A helical membrane pass occupies residues 1112 to 1132; sequence TPIAAIIIPPLGLIYFFVQRF. Residues 1133 to 1203 lie on the Cytoplasmic side of the membrane; it reads YVASSRQLKR…VANRWLAVRL (71 aa). Residues 1204–1224 traverse the membrane as a helical segment; the sequence is ECVGNCIVLFAALFAVISRHS. Over 1225–1226 the chain is Extracellular; sequence LS. The helical transmembrane segment at 1227–1247 threads the bilayer; that stretch reads AGLVGLSVSYSLQVTTYLNWL. Residues 1248–1531 lie on the Cytoplasmic side of the membrane; that stretch reads VRMSSEMETN…YNMARDAGLV (284 aa). The region spanning 1293–1527 is the ABC transporter 2 domain; that stretch reads VEFRNYCLRY…RGLFYNMARD (235 aa). 1327 to 1334 is an ATP binding site; that stretch reads GRTGAGKS.

It belongs to the ABC transporter superfamily. ABCC family. Conjugate transporter (TC 3.A.1.208) subfamily.

Its subcellular location is the cell membrane. It is found in the basolateral cell membrane. It catalyses the reaction ATP + H2O + xenobioticSide 1 = ADP + phosphate + xenobioticSide 2.. It carries out the reaction an S-substituted glutathione(in) + ATP + H2O = an S-substituted glutathione(out) + ADP + phosphate + H(+). The enzyme catalyses sphing-4-enine 1-phosphate(in) + ATP + H2O = sphing-4-enine 1-phosphate(out) + ADP + phosphate + H(+). The catalysed reaction is leukotriene C4(in) + ATP + H2O = leukotriene C4(out) + ADP + phosphate + H(+). It catalyses the reaction 17beta-estradiol 17-O-(beta-D-glucuronate)(in) + ATP + H2O = 17beta-estradiol 17-O-(beta-D-glucuronate)(out) + ADP + phosphate + H(+). It carries out the reaction daunorubicin(in) + ATP + H2O = daunorubicin(out) + ADP + phosphate + H(+). The enzyme catalyses vincristine(in) + ATP + H2O = vincristine(out) + ADP + phosphate + H(+). The catalysed reaction is 2',3'-cGAMP(in) + ATP + H2O = 2',3'-cGAMP(out) + ADP + phosphate + H(+). It catalyses the reaction S-[(2E,6E,10E)-geranylgeranyl]-L-glutathione(in) + ATP + H2O = S-[(2E,6E,10E)-geranylgeranyl]-L-glutathione(out) + ADP + phosphate + H(+). It carries out the reaction prostaglandin A2-S-(R)-glutathione(in) + ATP + H2O = prostaglandin A2-S-(R)-glutathione(out) + ADP + phosphate + H(+). The enzyme catalyses prostaglandin A2-S-(S)-glutathione(in) + ATP + H2O = prostaglandin A2-S-(S)-glutathione(out) + ADP + phosphate + H(+). Its activity is regulated as follows. MK 571 inhibits sphingosine 1-phosphate and leukotriene C4 export. Functionally, mediates export of organic anions and drugs from the cytoplasm. Mediates ATP-dependent transport of glutathione and glutathione conjugates, leukotriene C4, estradiol-17-beta-o-glucuronide, methotrexate, antiviral drugs and other xenobiotics. Confers resistance to anticancer drugs by decreasing accumulation of drug in cells, and by mediating ATP- and GSH-dependent drug export. Hydrolyzes ATP with low efficiency. Catalyzes the export of sphingosine 1-phosphate from mast cells independently of their degranulation. Participates in inflammatory response by allowing export of leukotriene C4 from leukotriene C4-synthesizing cells. Mediates ATP-dependent, GSH-independent cyclic GMP-AMP (cGAMP) export. Thus, by limiting intracellular cGAMP concentrations negatively regulates the cGAS-STING pathway. Exports S-geranylgeranyl-glutathione (GGG) in lymphoid cells and stromal compartments of lymphoid organs. ABCC1 (via extracellular transport) with GGT5 (via GGG catabolism) establish GGG gradients within lymphoid tissues to position P2RY8-positive lymphocytes at germinal centers in lymphoid follicles and restrict their chemotactic transmigration from blood vessels to the bone marrow parenchyma. Mediates basolateral export of GSH-conjugated R- and S-prostaglandin A2 diastereomers in polarized epithelial cells. This Macaca fascicularis (Crab-eating macaque) protein is Multidrug resistance-associated protein 1.